Here is a 443-residue protein sequence, read N- to C-terminus: MYLPQEIIRRKRDNKVLTTEEINFFIQGVAKNTVSEGQIAAFAMAVYFNEMTMPERIALTCAMRDSGMVIDWSHMNFDGPIVDKHSTGGVGDVTSLMLGPMVAACGGYVPMISGRGLGHTGGTLDKLESIAGYNIMPNNDLFGKVTKEAGVAIIGQTGDLAPADKRVYATRDVTATVDNISLITASILSKKLAAGLDSLVMDVKVGSGAFMPTYEASEELAKSIVAVANGAGTKTTALLTDMNQVLASTAGNALEVREAIRFLTGEYRNPRLYEVAMALCAEMLVIANLAKDEQEACIKLQAVLDNGKAAECFGKMVFGLGGPNDIIENYDNHLETAQIIKPVFADKSGFVNTMDTRDLGMAVVGMGGGRRVASDTIDYAVGLSDMIRLGQTVDSNQPLAMIHARNEDQWQQAADAVKAAIVISEEQPEATPEVYRKVRSQDV.

Belongs to the thymidine/pyrimidine-nucleoside phosphorylase family. As to quaternary structure, homodimer.

It carries out the reaction thymidine + phosphate = 2-deoxy-alpha-D-ribose 1-phosphate + thymine. Its pathway is pyrimidine metabolism; dTMP biosynthesis via salvage pathway; dTMP from thymine: step 1/2. Its function is as follows. The enzymes which catalyze the reversible phosphorolysis of pyrimidine nucleosides are involved in the degradation of these compounds and in their utilization as carbon and energy sources, or in the rescue of pyrimidine bases for nucleotide synthesis. This chain is Thymidine phosphorylase, found in Aliivibrio salmonicida (strain LFI1238) (Vibrio salmonicida (strain LFI1238)).